A 258-amino-acid chain; its full sequence is tRNA (guanine-N(1)-)-methyltransferase (258 aa).

S-adenosyl-L-methionine-binding positions include Gly-122 and Leu-142 to Leu-147.

Belongs to the RNA methyltransferase TrmD family. As to quaternary structure, homodimer.

Its subcellular location is the cytoplasm. The catalysed reaction is guanosine(37) in tRNA + S-adenosyl-L-methionine = N(1)-methylguanosine(37) in tRNA + S-adenosyl-L-homocysteine + H(+). Specifically methylates guanosine-37 in various tRNAs. The chain is tRNA (guanine-N(1)-)-methyltransferase from Hahella chejuensis (strain KCTC 2396).